We begin with the raw amino-acid sequence, 764 residues long: HEAKTENAVQANMELEFKRNRERFGFLKWGSSAFHNMLVVPPGSGIVHQVNLEYLGRVVFNTNGLLYPDSVVGTDSHTTMIDGLGVAGWGVGGIEAEAAMLGQPMSMVLPGVVGFKLVGKLRNGVTATDLVLTVTQMLRKHGVVGKFVEFYGEGMGELSLADRATIANMSPEYGATMGFFPVDHVTLQYLKLTGRKDETISMIESYLLANKMFVDYSEPQVERVYSSHIELNLSDVEPCISGPKRPHDRVPLKEMKADWHACLDNRVGFKGFAIPKEAQVKVAEFNFHGSPAQLRHGDVVIAAITSCTNTSSSVMLGAALVAKKACELGLEVKPWIKTVLLQALGVVTKYLAKSGLQKYLNQLGFNIVGYGCTTCIGNSGDIDESVASAITGNDIVAAAVLSGNRNFEGRVHPLTRANYLASPPLVVAYALAGTVDIDFESEPIGVGKDGKKVFFRDIWPTSEEVAVVVNSNVLPDMFRATYQAITEGNATWNLLSVPEGTLYSWDPTSTYIHEPPYFKDMSMSPPGPHGVKNAYCLLNFGDSITTDHISPAGSIHKDSPAAKYLLERGVDRRDFNSYGVAVVMMRLWHVHFANIRIVNKLLKGEVGPKTIHIPSREKLSVFDAAMRYKSEGQDTIILAGAEYGIGSSRDWAAKGPMLLGVKAVIAKSFERIHRSNLVGMGIIPLCFKAGEDADSLGLTGHERFTIDLPSNVGEIRPGQDVAVVTDTGKSFSCILRFDTEVELAYFDHGGILQYVIRNLIHSKH.

75–77 (DSH) contacts substrate. [4Fe-4S] cluster-binding residues include Cys307, Cys372, and Cys375. Substrate contacts are provided by residues Arg405, Arg410, Arg568, and 648–649 (SR).

The protein belongs to the aconitase/IPM isomerase family. Requires [4Fe-4S] cluster as cofactor.

The protein localises to the cytoplasm. It carries out the reaction citrate = D-threo-isocitrate. It participates in carbohydrate metabolism; glyoxylate and dicarboxylate metabolism. Functionally, catalyzes the isomerization of citrate to isocitrate via cis-aconitate. This is Aconitate hydratase (ACO) from Cucumis melo var. conomon (Oriental pickling melon).